The sequence spans 69 residues: Defensin-like protein 166 (69 aa).

Positions 1–15 are cleaved as a signal peptide; it reads MIIVIIFLVIYFNNQ. 4 cysteine pairs are disulfide-bonded: Cys-19–Cys-68, Cys-24–Cys-44, Cys-29–Cys-62, and Cys-33–Cys-64.

This sequence belongs to the DEFL family.

Its subcellular location is the secreted. The chain is Defensin-like protein 166 from Arabidopsis thaliana (Mouse-ear cress).